Consider the following 139-residue polypeptide: Putative pre-16S rRNA nuclease (139 aa).

The protein belongs to the YqgF nuclease family.

The protein localises to the cytoplasm. In terms of biological role, could be a nuclease involved in processing of the 5'-end of pre-16S rRNA. This Streptococcus suis (strain 98HAH33) protein is Putative pre-16S rRNA nuclease.